The chain runs to 296 residues: Arginine/serine-rich protein 1 (296 aa).

The disordered stretch occupies residues 1–131 (MSNYVNDMWP…RSRSRSRERS (131 aa)). A Phosphoserine modification is found at Ser-12. A compositionally biased stretch (low complexity) spans 20 to 31 (SASRSGGSSRLS). Basic residues predominate over residues 32 to 125 (SRSRSRSFSR…RSRSRSRSRS (94 aa)). 2 positions are modified to phosphoserine: Ser-111 and Ser-113. Arg-141 is subject to Omega-N-methylarginine. A compositionally biased stretch (basic and acidic residues) spans 156–165 (ERSRWRDRSR). Disordered stretches follow at residues 156 to 175 (ERSRWRDRSRTRSRSRTPFR) and 217 to 296 (SHGI…WIPV). The span at 245–261 (EKPSQQRSIAFSSNNSV) shows a compositional bias: polar residues. Residues 272-287 (ATEETSSRSPKIDKKK) are compositionally biased toward basic and acidic residues. Ser-280 is modified (phosphoserine).

The protein belongs to the RSRP family. Phosphorylated. Phosphorylation at Ser-111 and Ser-113 mediates the interaction with spliceosome proteins.

It is found in the nucleus. Its function is as follows. Probably acts as a spliceosomal factor that contributes to spliceosome assembly and regulates the isoform switching of proteins such as PARP6. The chain is Arginine/serine-rich protein 1 (RSRP1) from Macaca fascicularis (Crab-eating macaque).